The primary structure comprises 235 residues: Secretory carrier-associated membrane protein 5A (235 aa).

Topologically, residues M1–R39 are cytoplasmic. A helical membrane pass occupies residues L40–A60. Over W61–S67 the chain is Extracellular. Residues A68–C88 form a helical membrane-spanning segment. At W89–S102 the chain is on the cytoplasmic side. The helical transmembrane segment at F103–G125 threads the bilayer. Topologically, residues I126 to A148 are extracellular. Residues V149–L169 traverse the membrane as a helical segment. Residues T170–M235 lie on the Cytoplasmic side of the membrane.

Belongs to the SCAMP family. SCAMP5 subfamily.

It is found in the cell membrane. The protein localises to the golgi apparatus membrane. The protein resides in the golgi apparatus. It localises to the trans-Golgi network membrane. Its subcellular location is the recycling endosome membrane. It is found in the cytoplasmic vesicle. The protein localises to the secretory vesicle. The protein resides in the synaptic vesicle membrane. Functionally, required for the calcium-dependent exocytosis of signal sequence-containing cytokines. Probably acts in cooperation with the SNARE machinery. This chain is Secretory carrier-associated membrane protein 5A (scamp5-a), found in Xenopus laevis (African clawed frog).